A 249-amino-acid polypeptide reads, in one-letter code: Phosphate import ATP-binding protein PstB (249 aa).

Residues 4 to 244 (VKIKDLSLFY…PQDKRTEDYI (241 aa)) form the ABC transporter domain. 36–43 (GPSGCGKS) contacts ATP.

This sequence belongs to the ABC transporter superfamily. Phosphate importer (TC 3.A.1.7) family. In terms of assembly, the complex is composed of two ATP-binding proteins (PstB), two transmembrane proteins (PstC and PstA) and a solute-binding protein (PstS).

The protein resides in the cell membrane. The enzyme catalyses phosphate(out) + ATP + H2O = ADP + 2 phosphate(in) + H(+). Functionally, part of the ABC transporter complex PstSACB involved in phosphate import. Responsible for energy coupling to the transport system. The sequence is that of Phosphate import ATP-binding protein PstB from Clostridium tetani (strain Massachusetts / E88).